A 99-amino-acid chain; its full sequence is MQPRTLLTVALLALLASARAEEVEGSLLLGSVQGYMEQASKTVQDALSSVQESDIAVVARGWMDNHFRFLKGYWSKFTDKFTGFWDSNPEDQPTPAIES.

Residues methionine 1–alanine 20 form the signal peptide. The residue at position 63 (methionine 63) is a Methionine sulfoxide. The interval arginine 68–serine 99 is lipid-binding. Threonine 94 carries O-linked (GalNAc...) threonine glycosylation.

The protein belongs to the apolipoprotein C3 family. In terms of processing, the most abundant glycoforms are characterized by an O-linked disaccharide galactose linked to N-acetylgalactosamine (Gal-GalNAc), further modified with up to 3 sialic acid residues. Less abundant glycoforms are characterized by more complex and fucosylated glycan moieties. O-glycosylated on Thr-94 with a core 1 or possibly core 8 glycan.

It is found in the secreted. In terms of biological role, component of triglyceride-rich very low density lipoproteins (VLDL) and high density lipoproteins (HDL) in plasma. Plays a multifaceted role in triglyceride homeostasis. Intracellularly, promotes hepatic very low density lipoprotein 1 (VLDL1) assembly and secretion; extracellularly, attenuates hydrolysis and clearance of triglyceride-rich lipoproteins (TRLs). Impairs the lipolysis of TRLs by inhibiting lipoprotein lipase and the hepatic uptake of TRLs by remnant receptors. Formed of several curved helices connected via semiflexible hinges, so that it can wrap tightly around the curved micelle surface and easily adapt to the different diameters of its natural binding partners. The protein is Apolipoprotein C-III (Apoc3) of Mus musculus (Mouse).